We begin with the raw amino-acid sequence, 790 residues long: Vacuolar protein sorting-associated protein 35C (790 aa).

Position 1 is an N-acetylmethionine (Met1).

Belongs to the VPS35 family. Component of the retromer complex which consists of VPS29 (MAG1), VPS26 (VPS26A or VPS26B), VPS35 (VPS35A or VPS35B or VPS35C), VPS5/17 (SNX1 or SNX2A or SNX2B). Component of a retromer subcomplex consisting of VPS29 (MAG1), VPS26 (VPS26A or VPS26B), VPS35 (VPS35A or VPS35B or VPS35C).

The protein resides in the cytoplasm. The protein localises to the endosome membrane. It is found in the prevacuolar compartment membrane. Its subcellular location is the golgi apparatus. It localises to the trans-Golgi network membrane. Its function is as follows. Plays a role in vesicular protein sorting. Component of the membrane-associated retromer complex which is essential in endosome-to-Golgi retrograde transport. Also involved in the efficient sorting of seed storage proteins. The VPS29-VPS26-VPS35 subcomplex may be involved in recycling of specific cargos from endosome to the plasma membrane. The chain is Vacuolar protein sorting-associated protein 35C (VPS35C) from Arabidopsis thaliana (Mouse-ear cress).